The following is a 2033-amino-acid chain: Envoplakin (2033 aa).

Residues 1 to 27 (MFKGLSKGSQGKGSPKGSPAKGSPKGS) are compositionally biased toward low complexity. Disordered regions lie at residues 1–37 (MFKG…AATQ) and 65–85 (QQDR…ETGR). The segment at 1 to 841 (MFKGLSKGSQ…LEPTLAVSAP (841 aa)) is globular 1. Residues 12 to 28 (KGSPKGSPAKGSPKGSP) are 4 X 4 AA tandem repeats of K-G-S-P. The segment covering 71-84 (SEQSQALQHQQETG) has biased composition (polar residues). The stretch at 229–330 (YTHLQGCTRQ…LCICQETQLQ (102 aa)) is one Spectrin repeat. The span at 388–401 (TERATGDLQRRSRD) shows a compositional bias: basic and acidic residues. Disordered regions lie at residues 388-418 (TERA…PLHV) and 891-916 (SEDI…ESEA). The SH3 domain occupies 413 to 470 (QQPLHVDSICDWDSGEVQLLQGERYKLVDNTDPHAWVVQGPGGETKRAPAACFCIPAP). The segment at 842-1673 (KRPRVAPLQE…AKVSREELSQ (832 aa)) is central fibrous rod domain. Residues 845-1135 (RVAPLQESIQ…AISSVEPKVI (291 aa)) adopt a coiled-coil conformation. Positions 891 to 902 (SEDIRRTHDAKQ) are enriched in basic and acidic residues. The Plectin 1 repeat unit spans residues 1185–1226 (KQRPKVQLQERVHEIFQVDPETEQEITRLKAKLQEMAGKRSG). Ser1575 is modified (phosphoserine). Residues 1614 to 1623 (QEESKLLSQK) show a composition bias toward low complexity. A disordered region spans residues 1614 to 1636 (QEESKLLSQKTESERQKAAQRGQ). A globular 2 region spans residues 1674-2033 (ETQTRETNLS…ASPTVPRSLR (360 aa)). A Plectin 2 repeat occupies 1678–1713 (RETNLSTKISILEPETGKDMSPYEAYKRGIIDRGQY). Phosphoserine is present on Ser1799. Plectin repeat units follow at residues 1818–1855 (LGLG…PITG), 1856–1893 (QKLL…NTST), 1894–1931 (QRLL…RESV), 1932–1969 (LPHL…EELA), and 1970–2007 (QLLQ…PLSG). Position 2025 is a phosphoserine (Ser2025).

It belongs to the plakin or cytolinker family. As to quaternary structure, may form a homodimer or a heterodimer with PPL. As to expression, exclusively expressed in stratified squamous epithelia.

It localises to the cell junction. Its subcellular location is the desmosome. The protein resides in the cornified envelope. The protein localises to the cytoplasm. It is found in the cytoskeleton. In terms of biological role, component of the cornified envelope of keratinocytes. May link the cornified envelope to desmosomes and intermediate filaments. The protein is Envoplakin (EVPL) of Homo sapiens (Human).